The following is a 511-amino-acid chain: Glucans biosynthesis protein G (511 aa).

Positions 1–22 are cleaved as a signal peptide; sequence MMKMRWLSAAVMLTLYTSSSWA.

Belongs to the OpgD/OpgG family.

The protein localises to the periplasm. It participates in glycan metabolism; osmoregulated periplasmic glucan (OPG) biosynthesis. In terms of biological role, involved in the biosynthesis of osmoregulated periplasmic glucans (OPGs). The chain is Glucans biosynthesis protein G from Shigella boydii serotype 4 (strain Sb227).